Here is a 575-residue protein sequence, read N- to C-terminus: V-type ATP synthase alpha chain (575 aa).

Residue 238–245 (GPFGAGKT) participates in ATP binding.

This sequence belongs to the ATPase alpha/beta chains family.

It carries out the reaction ATP + H2O + 4 H(+)(in) = ADP + phosphate + 5 H(+)(out). In terms of biological role, produces ATP from ADP in the presence of a proton gradient across the membrane. The V-type alpha chain is a catalytic subunit. This Borrelia garinii subsp. bavariensis (strain ATCC BAA-2496 / DSM 23469 / PBi) (Borreliella bavariensis) protein is V-type ATP synthase alpha chain.